The following is a 2296-amino-acid chain: Protein Ycf2 (2296 aa).

1650-1657 (GSIGIGRS) lines the ATP pocket.

This sequence belongs to the Ycf2 family.

Its subcellular location is the plastid. It localises to the chloroplast stroma. Probable ATPase of unknown function. Its presence in a non-photosynthetic plant (Epifagus virginiana) and experiments in tobacco indicate that it has an essential function which is probably not related to photosynthesis. The protein is Protein Ycf2 of Arabis hirsuta (Hairy rock-cress).